A 431-amino-acid chain; its full sequence is 3-phosphoshikimate 1-carboxyvinyltransferase (431 aa).

Residues lysine 22, serine 23, and arginine 27 each coordinate 3-phosphoshikimate. A phosphoenolpyruvate-binding site is contributed by lysine 22. Glycine 94 and arginine 122 together coordinate phosphoenolpyruvate. Serine 167, glutamine 169, aspartate 315, and lysine 342 together coordinate 3-phosphoshikimate. A phosphoenolpyruvate-binding site is contributed by glutamine 169. Aspartate 315 acts as the Proton acceptor in catalysis. Arginine 346 and arginine 388 together coordinate phosphoenolpyruvate.

It belongs to the EPSP synthase family. Monomer.

It localises to the cytoplasm. It catalyses the reaction 3-phosphoshikimate + phosphoenolpyruvate = 5-O-(1-carboxyvinyl)-3-phosphoshikimate + phosphate. The protein operates within metabolic intermediate biosynthesis; chorismate biosynthesis; chorismate from D-erythrose 4-phosphate and phosphoenolpyruvate: step 6/7. Functionally, catalyzes the transfer of the enolpyruvyl moiety of phosphoenolpyruvate (PEP) to the 5-hydroxyl of shikimate-3-phosphate (S3P) to produce enolpyruvyl shikimate-3-phosphate and inorganic phosphate. This Pelobacter propionicus (strain DSM 2379 / NBRC 103807 / OttBd1) protein is 3-phosphoshikimate 1-carboxyvinyltransferase.